A 76-amino-acid chain; its full sequence is DNA-binding protein S1FA2 (76 aa).

A Nuclear localization signal motif is present at residues 50–55 (PPRKKK). Basic residues predominate over residues 51-66 (PRKKKPLSKKKLKREK). The tract at residues 51–76 (PRKKKPLSKKKLKREKLKQGVPVPGE) is disordered.

It belongs to the S1FA transcription factor family.

Its subcellular location is the nucleus. Functionally, DNA-binding protein that specifically recognizes a negative element (S1F) within the RPS1 promoter. The chain is DNA-binding protein S1FA2 (S1FA2) from Arabidopsis thaliana (Mouse-ear cress).